Reading from the N-terminus, the 451-residue chain is uncharacterized protein (451 aa).

Residues 2–60 enclose the TRAM domain; the sequence is VVKVKQKIPLKIKRMGINGEGIGFYQKTLVFVPGALKGENIFCQITAVKRNFAEAKLLT. Positions 73, 79, 82, and 162 each coordinate [4Fe-4S] cluster. S-adenosyl-L-methionine is bound by residues Gln-283, Tyr-312, Asp-333, and Asp-381. Cys-408 serves as the catalytic Nucleophile.

Belongs to the class I-like SAM-binding methyltransferase superfamily. RNA M5U methyltransferase family.

This is an uncharacterized protein from Streptococcus pyogenes serotype M3 (strain ATCC BAA-595 / MGAS315).